The sequence spans 232 residues: N-(5'-phosphoribosyl)anthranilate isomerase (232 aa).

It belongs to the TrpF family.

It carries out the reaction N-(5-phospho-beta-D-ribosyl)anthranilate = 1-(2-carboxyphenylamino)-1-deoxy-D-ribulose 5-phosphate. Its pathway is amino-acid biosynthesis; L-tryptophan biosynthesis; L-tryptophan from chorismate: step 3/5. This chain is N-(5'-phosphoribosyl)anthranilate isomerase (TRP1), found in Lipomyces starkeyi (Oleaginous yeast).